The primary structure comprises 67 residues: Bowman-Birk type proteinase inhibitor A4 (67 aa).

4 disulfide bridges follow: Cys-10–Cys-29, Cys-16–Cys-27, Cys-36–Cys-43, and Cys-40–Cys-57.

It belongs to the Bowman-Birk serine protease inhibitor family. Expressed in bulb (at protein level).

Functionally, serine protease inhibitor. Inhibits trypsin (Ki=12nM) and weakly inhibits chymotrypsin with (Ki=460nm). Does not inhibit bacterial subtilisin. This is Bowman-Birk type proteinase inhibitor A4 from Hyacinthus orientalis (Common hyacinth).